The primary structure comprises 205 residues: Guanylyl cyclase-activating protein 1 (205 aa).

A lipid anchor (N-myristoyl glycine) is attached at glycine 2. Asparagine 3 is subject to Deamidated asparagine. 4 EF-hand domains span residues 14–49 (SSTE…KNLS), 51–86 (WASQ…VLKG), 87–122 (KVEQ…IRAI), and 131–166 (TAEE…DQML). Ca(2+)-binding residues include aspartate 64, asparagine 66, aspartate 68, tyrosine 70, glutamate 75, aspartate 100, aspartate 102, asparagine 104, cysteine 106, glutamate 111, aspartate 144, asparagine 146, aspartate 148, glutamate 150, and glutamate 155. The segment at 185–205 (NGEQDEEGASGRETEAAEADG) is disordered.

Homodimer. In terms of tissue distribution, detected in the retina. Detected in rod and cone photoreceptor cells (at protein level). Also present in certain pinealocytes.

It is found in the membrane. Its subcellular location is the photoreceptor inner segment. It localises to the cell projection. The protein resides in the cilium. The protein localises to the photoreceptor outer segment. In terms of biological role, stimulates retinal guanylyl cyclase when free calcium ions concentration is low and inhibits guanylyl cyclase when free calcium ions concentration is elevated. This Ca(2+)-sensitive regulation of retinal guanylyl cyclase is a key event in recovery of the dark state of rod photoreceptors following light exposure. May be involved in cone photoreceptor light response and recovery of response in bright light. This Bos taurus (Bovine) protein is Guanylyl cyclase-activating protein 1 (GUCA1A).